We begin with the raw amino-acid sequence, 573 residues long: Potassium-transporting ATPase potassium-binding subunit (573 aa).

The next 10 membrane-spanning stretches (helical) occupy residues 3–23 (AEGL…TPLL), 65–85 (GYTL…YALL), 136–156 (GLTV…VALI), 179–199 (LYVL…QGVP), 254–274 (LTNL…IYSF), 286–306 (ALWT…WWAE), 383–403 (AGLY…GLMV), 423–443 (VIAV…TTVV), 489–509 (GLGL…LAIA), and 531–551 (LFIT…FFPA).

It belongs to the KdpA family. The system is composed of three essential subunits: KdpA, KdpB and KdpC.

The protein localises to the cell inner membrane. Functionally, part of the high-affinity ATP-driven potassium transport (or Kdp) system, which catalyzes the hydrolysis of ATP coupled with the electrogenic transport of potassium into the cytoplasm. This subunit binds the periplasmic potassium ions and delivers the ions to the membrane domain of KdpB through an intramembrane tunnel. In Rhodospirillum centenum (strain ATCC 51521 / SW), this protein is Potassium-transporting ATPase potassium-binding subunit.